Consider the following 287-residue polypeptide: MTAQKLDGKATAAAIKSELAERVAALRDQGVVPGLGTVLVGEDPASHQYVAGKHRDCAQVGIESIRVDLPADVTEEELAQKIRGLNANPHCTGYIVQLPLPRHIDTNWALNLIDPNKDADGLTPASLGRLVLNEPAPLPCTPRGIVELLTRHGIELPGANVCVVGRGTTVGRPLGLLLTRRSENCTVTLCHTGTRNLAEHTRQADIIIGAAGSPGLINADMIREGAVLVDVGVSRTPEGKIQGDFTADVWEKAAWVSPNPGGVGPMTRAMLLSNVVDRAERLTADPS.

Residues 165–167 (GRG), Thr192, and Val233 contribute to the NADP(+) site.

This sequence belongs to the tetrahydrofolate dehydrogenase/cyclohydrolase family. In terms of assembly, homodimer.

The enzyme catalyses (6R)-5,10-methylene-5,6,7,8-tetrahydrofolate + NADP(+) = (6R)-5,10-methenyltetrahydrofolate + NADPH. It carries out the reaction (6R)-5,10-methenyltetrahydrofolate + H2O = (6R)-10-formyltetrahydrofolate + H(+). The protein operates within one-carbon metabolism; tetrahydrofolate interconversion. Its function is as follows. Catalyzes the oxidation of 5,10-methylenetetrahydrofolate to 5,10-methenyltetrahydrofolate and then the hydrolysis of 5,10-methenyltetrahydrofolate to 10-formyltetrahydrofolate. This Cutibacterium acnes (strain DSM 16379 / KPA171202) (Propionibacterium acnes) protein is Bifunctional protein FolD.